The following is a 179-amino-acid chain: Pectinesterase inhibitor 5 (179 aa).

The signal sequence occupies residues 1–25; that stretch reads MATMLINHMLFLTSLLIVVFPVANA. Intrachain disulfides connect cysteine 35–cysteine 44 and cysteine 101–cysteine 141.

This sequence belongs to the PMEI family. Expressed in seeds, buds, and mature flowers.

It localises to the secreted. It is found in the extracellular space. The protein resides in the apoplast. Pectin methylesterase (PME) inhibitor that targets PME from seeds and modulates PME activity and pectin methylesterification during seed germination. The protein is Pectinesterase inhibitor 5 of Arabidopsis thaliana (Mouse-ear cress).